The chain runs to 577 residues: Proline--tRNA ligase (577 aa).

The protein belongs to the class-II aminoacyl-tRNA synthetase family. ProS type 1 subfamily. In terms of assembly, homodimer.

It is found in the cytoplasm. It catalyses the reaction tRNA(Pro) + L-proline + ATP = L-prolyl-tRNA(Pro) + AMP + diphosphate. In terms of biological role, catalyzes the attachment of proline to tRNA(Pro) in a two-step reaction: proline is first activated by ATP to form Pro-AMP and then transferred to the acceptor end of tRNA(Pro). As ProRS can inadvertently accommodate and process non-cognate amino acids such as alanine and cysteine, to avoid such errors it has two additional distinct editing activities against alanine. One activity is designated as 'pretransfer' editing and involves the tRNA(Pro)-independent hydrolysis of activated Ala-AMP. The other activity is designated 'posttransfer' editing and involves deacylation of mischarged Ala-tRNA(Pro). The misacylated Cys-tRNA(Pro) is not edited by ProRS. In Limosilactobacillus reuteri (strain DSM 20016) (Lactobacillus reuteri), this protein is Proline--tRNA ligase.